The sequence spans 361 residues: Peptide chain release factor 1 (361 aa).

The residue at position 235 (Gln-235) is an N5-methylglutamine. Positions 288–307 (AARSADRKDQVGSGDRSERI) are disordered.

The protein belongs to the prokaryotic/mitochondrial release factor family. Methylated by PrmC. Methylation increases the termination efficiency of RF1.

The protein localises to the cytoplasm. Its function is as follows. Peptide chain release factor 1 directs the termination of translation in response to the peptide chain termination codons UAG and UAA. This Nitrobacter hamburgensis (strain DSM 10229 / NCIMB 13809 / X14) protein is Peptide chain release factor 1.